The sequence spans 309 residues: MAKTYIFGHQNPDTDAIASAIIMADFEQLTGNSEATPYRLGDINPETKFALDHFEVKAPELLSDNLDGREVILVDHNEFQQSAETISDAEIKHVVDHHRIANFETASPLWYRAEPVGCTATILYKMYKERGFEIKPHIAGLMISAIISDSLLFKSPTCTDEDVNAAKDLKDLANVDLDEYGLEMLKAGASTTDKSAEELLDMDAKSFNMGDYVTRIAQVNTVDIDEVLNRKEDLEKAMLETSANEKYDLFVLVVTDIINSDSKILVVGAEKDKVGEAFKVQLDDGMAFLSGVVSRKKQVVPQITDALIK.

Mn(2+) contacts are provided by histidine 9, aspartate 13, aspartate 15, aspartate 75, histidine 97, and aspartate 149.

It belongs to the PPase class C family. The cofactor is Mn(2+).

The protein resides in the cytoplasm. It carries out the reaction diphosphate + H2O = 2 phosphate + H(+). In Staphylococcus haemolyticus (strain JCSC1435), this protein is Probable manganese-dependent inorganic pyrophosphatase.